Here is a 336-residue protein sequence, read N- to C-terminus: Protease HtpX homolog (336 aa).

Transmembrane regions (helical) follow at residues 7 to 24 (AMLL…GFLI) and 29 to 48 (GMMI…YWNA). Residue His130 coordinates Zn(2+). Glu131 is a catalytic residue. His134 contacts Zn(2+). 2 helical membrane-spanning segments follow: residues 145–165 (IVAT…FLGG) and 171–191 (PFGF…AMIV). Glu200 serves as a coordination point for Zn(2+). Residues 278-287 (QQMAGGTQAA) are compositionally biased toward low complexity. Residues 278-336 (QQMAGGTQAAPRPTPRQAGEQQPSGPWGQAPQAEQPAEPERPKANPWGRNPTGPKGRWS) form a disordered region.

Belongs to the peptidase M48B family. Zn(2+) is required as a cofactor.

It localises to the cell inner membrane. This chain is Protease HtpX homolog, found in Mesorhizobium japonicum (strain LMG 29417 / CECT 9101 / MAFF 303099) (Mesorhizobium loti (strain MAFF 303099)).